We begin with the raw amino-acid sequence, 381 residues long: cAMP-dependent protein kinase type I-beta regulatory subunit (381 aa).

The interval 1–136 (MASPSCFHSE…ALAKAISKNV (136 aa)) is dimerization and phosphorylation. The residue at position 3 (serine 3) is a Phosphoserine. Residue tyrosine 21 is modified to 3'-nitrotyrosine. The segment at 66–88 (LARQKSNSQCDSHDEEISPTPPN) is disordered. Residues serine 77 and serine 83 each carry the phosphoserine modification. Threonine 85 is subject to Phosphothreonine. The short motif at 96–100 (RRGGV) is the Pseudophosphorylation motif element. Arginine 97 is subject to Omega-N-methylarginine. 3',5'-cyclic AMP contacts are provided by residues 137–254 (LFSH…SKVS), glutamate 202, arginine 211, 255–381 (ILES…SLTV), glutamate 326, and arginine 335.

The protein belongs to the cAMP-dependent kinase regulatory chain family. As to quaternary structure, the inactive holoenzyme is composed of two regulatory chains and two catalytic chains. Activation by cAMP releases the two active catalytic monomers and the regulatory dimer. Interacts with PRKX; regulates this cAMP-dependent protein kinase. Interacts with smAKAP; this interaction may target PRKAR1B to the plasma membrane. In terms of processing, the pseudophosphorylation site binds to the substrate-binding region of the catalytic chain, resulting in the inhibition of its activity. As to expression, four types of regulatory chains are found: I-alpha, I-beta, II-alpha, and II-beta. Their expression varies among tissues and is in some cases constitutive and in others inducible.

The protein localises to the cell membrane. Functionally, regulatory subunit of the cAMP-dependent protein kinases involved in cAMP signaling in cells. The polypeptide is cAMP-dependent protein kinase type I-beta regulatory subunit (Prkar1b) (Mus musculus (Mouse)).